A 213-amino-acid chain; its full sequence is Golgi SNAP receptor complex member 2 homolog memb-1 (213 aa).

The Cytoplasmic portion of the chain corresponds to 1–189 (MEALYQSTNF…QVIDRRVRED (189 aa)). The chain crosses the membrane as a helical; Anchor for type IV membrane protein span at residues 190 to 210 (WILFVIGCIVCCIFMYAFYRF). Residues 211–213 (WRG) lie on the Vesicular side of the membrane.

The protein belongs to the GOSR2 family. As to quaternary structure, part of a unique SNARE complex.

The protein localises to the golgi apparatus. It localises to the cis-Golgi network membrane. The protein resides in the golgi apparatus membrane. Its subcellular location is the endoplasmic reticulum membrane. Functionally, involved in transport of proteins from the cis/medial-Golgi to the trans-Golgi network. The polypeptide is Golgi SNAP receptor complex member 2 homolog memb-1 (Caenorhabditis elegans).